We begin with the raw amino-acid sequence, 295 residues long: 4-hydroxy-tetrahydrodipicolinate synthase (295 aa).

T48 is a binding site for pyruvate. Y136 (proton donor/acceptor) is an active-site residue. K164 acts as the Schiff-base intermediate with substrate in catalysis. A pyruvate-binding site is contributed by I206.

It belongs to the DapA family. In terms of assembly, homotetramer; dimer of dimers.

Its subcellular location is the cytoplasm. The catalysed reaction is L-aspartate 4-semialdehyde + pyruvate = (2S,4S)-4-hydroxy-2,3,4,5-tetrahydrodipicolinate + H2O + H(+). It functions in the pathway amino-acid biosynthesis; L-lysine biosynthesis via DAP pathway; (S)-tetrahydrodipicolinate from L-aspartate: step 3/4. Functionally, catalyzes the condensation of (S)-aspartate-beta-semialdehyde [(S)-ASA] and pyruvate to 4-hydroxy-tetrahydrodipicolinate (HTPA). The protein is 4-hydroxy-tetrahydrodipicolinate synthase of Actinobacillus pleuropneumoniae serotype 7 (strain AP76).